A 287-amino-acid chain; its full sequence is Type 1 encapsulin shell protein EncA (287 aa).

This sequence belongs to the encapsulin family. Family 1 subfamily. The 32 nm encapsulin nanocompartment is formed by 180 subunits; monomers form pentamers which assemble to form shells. There are 36 pores where the pentamers meet as well as 3-fold axis channels and dimer channels. The N-terminus of the protein is inside the shell.

It localises to the encapsulin nanocompartment. In terms of biological role, shell component of a type 1, iron-storage encapsulin nanocompartment. Encapsulin nanocompartments are 32 nm in diameter with an iron- and phosphorus-rich core (4Fe:1P) about 24 nm in diameter. Upon expression in E.coli most particles are 32 nm, 20% are 18 nm. The core is filled with an average of 14 dense granules, 5-6 nm in diameter that are not evenly distributed. Each nanocompartment is estimated to hold 30,000-35,000 Fe atoms. The minor proteins EncB, EncC and EncD probably lie against the interior face of the nanocompartment. The chain is Type 1 encapsulin shell protein EncA from Myxococcus xanthus (strain DK1622).